Here is a 61-residue protein sequence, read N- to C-terminus: Bacteriocin mesentericin Y105 (61 aa).

The N-terminal stretch at 1-24 is a signal peptide; it reads MTNMKSVEAYQQLDNQNLKKVVGG. Residues Cys-33 and Cys-38 are joined by a disulfide bond.

This sequence belongs to the bacteriocin class IIA/YGNGV family.

It is found in the secreted. Functionally, bacteriocin active against Listeria monocytogenes. This Leuconostoc mesenteroides protein is Bacteriocin mesentericin Y105 (mesY).